We begin with the raw amino-acid sequence, 388 residues long: LL-diaminopimelate aminotransferase (388 aa).

Positions 13, 38, 102, 126, and 176 each coordinate substrate. Pyridoxal 5'-phosphate contacts are provided by residues serine 101–lysine 102, tyrosine 126, asparagine 176, tyrosine 207, and serine 235–serine 237. Residue lysine 238 is modified to N6-(pyridoxal phosphate)lysine. Arginine 246 contributes to the pyridoxal 5'-phosphate binding site. Residue arginine 364 participates in substrate binding.

The protein belongs to the class-I pyridoxal-phosphate-dependent aminotransferase family. LL-diaminopimelate aminotransferase subfamily. In terms of assembly, homodimer. Pyridoxal 5'-phosphate serves as cofactor.

It catalyses the reaction (2S,6S)-2,6-diaminopimelate + 2-oxoglutarate = (S)-2,3,4,5-tetrahydrodipicolinate + L-glutamate + H2O + H(+). It functions in the pathway amino-acid biosynthesis; L-lysine biosynthesis via DAP pathway; LL-2,6-diaminopimelate from (S)-tetrahydrodipicolinate (aminotransferase route): step 1/1. In terms of biological role, involved in the synthesis of meso-diaminopimelate (m-DAP or DL-DAP), required for both lysine and peptidoglycan biosynthesis. Catalyzes the direct conversion of tetrahydrodipicolinate to LL-diaminopimelate. The protein is LL-diaminopimelate aminotransferase of Dehalococcoides mccartyi (strain CBDB1).